The chain runs to 185 residues: Small ribosomal subunit protein uS4c (185 aa).

The S4 RNA-binding domain maps to 72–134 (MRLDNVIFRL…PTSCNALKGE (63 aa)). A disordered region spans residues 132 to 154 (KGESPGGGETPDHLTASLSEGSR).

This sequence belongs to the universal ribosomal protein uS4 family. Part of the 30S ribosomal subunit. Contacts protein S5. The interaction surface between S4 and S5 is involved in control of translational fidelity.

It localises to the plastid. Its subcellular location is the chloroplast. One of the primary rRNA binding proteins, it binds directly to 16S rRNA where it nucleates assembly of the body of the 30S subunit. In terms of biological role, with S5 and S12 plays an important role in translational accuracy. The chain is Small ribosomal subunit protein uS4c (rps4) from Woodwardia unigemmata (Chainfern).